The chain runs to 168 residues: Pleiotrophin (168 aa).

A signal peptide spans methionine 1–alanine 32. 5 disulfide bridges follow: cysteine 47-cysteine 76, cysteine 55-cysteine 85, cysteine 62-cysteine 89, cysteine 99-cysteine 131, and cysteine 109-cysteine 141. Chondroitin sulfate binding stretches follow at residues lysine 92–cysteine 99 and lysine 123–cysteine 131. The interval lysine 139–aspartate 168 is disordered. Positions proline 147–aspartate 168 are chondroitin sulfate A binding.

It belongs to the pleiotrophin family. In terms of assembly, interacts with ALK and NEK6. Interacts with PTPRZ1 (via chondroitin sulfate groups); promotes formation of homooligomers; oligomerization impairs tyrosine phosphatase activity. Forms a complex with PTPRZ1 and CTNNB1; this complex inactivates PTPRZ1 protein tyrosine phosphatase activity through PTN interaction and stimulates tyrosine phosphorylation of CTNNB1. Interacts with ITGB3 and ITGA5. Forms a complex with PTPRZ1 and integrin alpha-V/beta-3 (ITGAV:ITGB3) that stimulates endothelial cell migration through ITGB3 'Tyr-773' phosphorylation. Interacts with SDC3 (via heparan sulfate chains); this interaction mediates the neurite outgrowth-promoting signal from PTN to the cytoskeleton of growing neurites; this interaction mediates osteoblast recruitment. Interacts with GPC2 (via heparan sulfate); this interaction promotes neurite outgrowth through binding of PTN with chondroitin sulfate of proteoglycans, thereby releasing PTPRS of chondroitin sulfate proteoglycans (CSPGs) and leading to binding with heparan sulfate of GPC2. Phosphorylated by NEK6.

The protein resides in the secreted. Secreted growth factor that mediates its signal through cell-surface proteoglycan and non-proteoglycan receptors. Binds cell-surface proteoglycan receptor via their chondroitin sulfate (CS) groups. Thereby regulates many processes like cell proliferation, cell survival, cell growth, cell differentiation and cell migration in several tissues namely neuron and bone. Also plays a role in synaptic plasticity and learning-related behavior by inhibiting long-term synaptic potentiation. Binds PTPRZ1, leading to neutralization of the negative charges of the CS chains of PTPRZ1, inducing PTPRZ1 clustering, thereby causing the dimerization and inactivation of its phosphatase activity leading to increased tyrosine phosphorylation of each of the PTPRZ1 substrates like ALK, CTNNB1 or AFAP1L2 in order to activate the PI3K-AKT pathway. Through PTPRZ1 binding controls oligodendrocyte precursor cell differentiation by enhancing the phosphorylation of AFAP1L2 in order to activate the PI3K-AKT pathway. Forms a complex with PTPRZ1 and integrin alpha-V/beta-3 (ITGAV:ITGB3) that stimulates endothelial cell migration through SRC dephosphorylation and activation that consequently leads to ITGB3 'Tyr-773' phosphorylation. In adult hippocampus promotes dendritic arborization, spine development, and functional integration and connectivity of newborn granule neurons through ALK by activating AKT signaling pathway. Binds GPC2 and chondroitin sulfate proteoglycans (CSPGs) at the neuron surface, leading to abrogation of binding between PTPRS and CSPGs and neurite outgrowth promotion. Binds SDC3 and mediates bone formation by recruiting and attaching osteoblasts/osteoblast precursors to the sites for new bone deposition. Binds ALK and promotes cell survival and cell proliferation through MAPK pathway activation. Inhibits proliferation and enhances differentiation of neural stem cells by inhibiting FGF2-induced fibroblast growth factor receptor signaling pathway. Mediates regulatory mechanisms in normal hemostasis and in hematopoietic regeneration and in maintaining the balance of myeloid and lymphoid regeneration. In addition may play a role in the female reproductive system, auditory response and the progesterone-induced decidualization pathway. This Sus scrofa (Pig) protein is Pleiotrophin.